The chain runs to 331 residues: Junctional sarcoplasmic reticulum protein 1 (331 aa).

Disordered regions lie at residues 1–118 and 157–331; these read MSMT…EELP and RVPE…KGRD. Residues 3–76 are mediates interaction with CACNA1S; sequence MTTRAWEELD…EKEPAARGTP (74 aa). Composition is skewed to basic and acidic residues over residues 21–35 and 61–71; these read LEDH…EDRA and TRPKKMEKEPA. Pro residues-rich tracts occupy residues 103-112 and 161-175; these read PLQPPPPPPA and PWVP…PSSP. Basic and acidic residues-rich tracts occupy residues 222 to 242 and 250 to 302; these read AVRE…PRRE and PRKE…EPRK. Residues 320–331 are compositionally biased toward basic residues; that stretch reads SRQKLRAGKGRD.

In terms of assembly, interacts with CACNA1S, CACNB1 and calsequestrin.

It localises to the sarcoplasmic reticulum membrane. Its subcellular location is the endoplasmic reticulum membrane. Functionally, involved in skeletal muscle excitation/contraction coupling (EC), probably acting as a regulator of the voltage-sensitive calcium channel CACNA1S. EC is a physiological process whereby an electrical signal (depolarization of the plasma membrane) is converted into a chemical signal, a calcium gradient, by the opening of ryanodine receptor calcium release channels. May regulate CACNA1S membrane targeting and activity. In Homo sapiens (Human), this protein is Junctional sarcoplasmic reticulum protein 1 (JSRP1).